Consider the following 405-residue polypeptide: Accessory Sec system protein translocase subunit SecY2 (405 aa).

10 consecutive transmembrane segments (helical) span residues 14 to 34, 65 to 85, 104 to 124, 131 to 151, 156 to 176, 191 to 211, 247 to 267, 285 to 305, 343 to 363, and 368 to 388; these read LFTS…LPFV, IFSV…MFSF, MYLT…RLPV, ILVV…LVWL, ASMG…LNIP, GIIV…ALMY, MYVM…GFIF, PLWV…FAFV, FSVI…LFVL, and LLRL…IFTI.

It belongs to the SecY/SEC61-alpha family. SecY2 subfamily. Component of the accessory SecA2/SecY2 protein translocase complex required to export cell wall proteins. May form heterotrimers with SecE and SecG subunits.

The protein resides in the cell membrane. Functionally, part of the accessory SecA2/SecY2 system specifically required for export of possible cell wall proteins. The central subunit of a protein translocation channel. The chain is Accessory Sec system protein translocase subunit SecY2 from Streptococcus pneumoniae serotype 4 (strain ATCC BAA-334 / TIGR4).